The sequence spans 99 residues: Glycine-rich protein (99 aa).

Positions 1-18 (MKSMIAVLLLALVATSMA) are cleaved as a signal peptide.

It belongs to the non-disulfide-bridged peptide (NDBP) superfamily. In terms of tissue distribution, expressed by the venom gland.

The protein resides in the secreted. The polypeptide is Glycine-rich protein (Lychas mucronatus (Chinese swimming scorpion)).